Reading from the N-terminus, the 440-residue chain is Xaa-Pro dipeptidase (440 aa).

Mn(2+)-binding residues include Asp-244, Asp-255, His-335, Glu-380, and Glu-419.

This sequence belongs to the peptidase M24B family. Bacterial-type prolidase subfamily. Mn(2+) serves as cofactor.

It catalyses the reaction Xaa-L-Pro dipeptide + H2O = an L-alpha-amino acid + L-proline. Functionally, splits dipeptides with a prolyl residue in the C-terminal position. The sequence is that of Xaa-Pro dipeptidase from Shewanella baltica (strain OS185).